Here is a 451-residue protein sequence, read N- to C-terminus: Tubulin alpha-2 chain (451 aa).

Gln11 serves as a coordination point for GTP. The residue at position 40 (Lys40) is an N6-acetyllysine. Residues Glu71, Gly144, Thr145, Thr179, Asn206, and Asn228 each contribute to the GTP site. Glu71 contacts Mg(2+). Residue Glu254 is part of the active site.

This sequence belongs to the tubulin family. In terms of assembly, dimer of alpha and beta chains. A typical microtubule is a hollow water-filled tube with an outer diameter of 25 nm and an inner diameter of 15 nM. Alpha-beta heterodimers associate head-to-tail to form protofilaments running lengthwise along the microtubule wall with the beta-tubulin subunit facing the microtubule plus end conferring a structural polarity. Microtubules usually have 13 protofilaments but different protofilament numbers can be found in some organisms and specialized cells. Mg(2+) is required as a cofactor. In terms of processing, undergoes a tyrosination/detyrosination cycle, the cyclic removal and re-addition of a C-terminal tyrosine residue by the enzymes tubulin tyrosine carboxypeptidase (TTCP) and tubulin tyrosine ligase (TTL), respectively. Acetylation of alpha chains at Lys-40 stabilizes microtubules and affects affinity and processivity of microtubule motors. This modification has a role in multiple cellular functions, ranging from cell motility, cell cycle progression or cell differentiation to intracellular trafficking and signaling.

The protein localises to the cytoplasm. It is found in the cytoskeleton. It catalyses the reaction GTP + H2O = GDP + phosphate + H(+). Its function is as follows. Tubulin is the major constituent of microtubules, a cylinder consisting of laterally associated linear protofilaments composed of alpha- and beta-tubulin heterodimers. Microtubules grow by the addition of GTP-tubulin dimers to the microtubule end, where a stabilizing cap forms. Below the cap, tubulin dimers are in GDP-bound state, owing to GTPase activity of alpha-tubulin. The protein is Tubulin alpha-2 chain (TUBA2) of Hordeum vulgare (Barley).